Consider the following 514-residue polypeptide: Variant surface glycoprotein ILTAT 1.24 (514 aa).

The N-terminal stretch at 1-23 (MVYRNILQLSVLKVLLIVLIVEA) is a signal peptide. Cystine bridges form between Cys-37/Cys-162 and Cys-143/Cys-204. An N-linked (GlcNAc...) asparagine glycan is attached at Asn-443. The disordered stretch occupies residues 451-476 (GVPVTQTQTAGADTTAEKCKGKGEKD). Residues 455 to 464 (TQTQTAGADT) are compositionally biased toward low complexity. Residues 465 to 476 (TAEKCKGKGEKD) show a composition bias toward basic and acidic residues. Asp-491 is lipidated: GPI-anchor amidated aspartate. The propeptide at 492–514 (SSILANKQFALSVASAAFVALLF) is removed in mature form.

It localises to the cell membrane. In terms of biological role, VSG forms a coat on the surface of the parasite. The trypanosome evades the immune response of the host by expressing a series of antigenically distinct VSGs from an estimated 1000 VSG genes. The sequence is that of Variant surface glycoprotein ILTAT 1.24 from Trypanosoma brucei brucei.